We begin with the raw amino-acid sequence, 165 residues long: Urease accessory protein UreE (165 aa).

The protein belongs to the UreE family.

The protein resides in the cytoplasm. Its function is as follows. Involved in urease metallocenter assembly. Binds nickel. Probably functions as a nickel donor during metallocenter assembly. This is Urease accessory protein UreE from Flavobacterium johnsoniae (strain ATCC 17061 / DSM 2064 / JCM 8514 / BCRC 14874 / CCUG 350202 / NBRC 14942 / NCIMB 11054 / UW101) (Cytophaga johnsonae).